Consider the following 221-residue polypeptide: 7-cyano-7-deazaguanine synthase (221 aa).

Position 12 to 22 (12 to 22 (FSGGQDSTTCL)) interacts with ATP. Residues Cys-190, Cys-199, Cys-202, and Cys-205 each contribute to the Zn(2+) site.

This sequence belongs to the QueC family. As to quaternary structure, homodimer. The cofactor is Zn(2+).

It catalyses the reaction 7-carboxy-7-deazaguanine + NH4(+) + ATP = 7-cyano-7-deazaguanine + ADP + phosphate + H2O + H(+). Its pathway is purine metabolism; 7-cyano-7-deazaguanine biosynthesis. Catalyzes the ATP-dependent conversion of 7-carboxy-7-deazaguanine (CDG) to 7-cyano-7-deazaguanine (preQ(0)). The chain is 7-cyano-7-deazaguanine synthase from Clostridium novyi (strain NT).